We begin with the raw amino-acid sequence, 341 residues long: S-adenosylmethionine:tRNA ribosyltransferase-isomerase (341 aa).

The protein belongs to the QueA family. As to quaternary structure, monomer.

The protein localises to the cytoplasm. The enzyme catalyses 7-aminomethyl-7-carbaguanosine(34) in tRNA + S-adenosyl-L-methionine = epoxyqueuosine(34) in tRNA + adenine + L-methionine + 2 H(+). It participates in tRNA modification; tRNA-queuosine biosynthesis. Functionally, transfers and isomerizes the ribose moiety from AdoMet to the 7-aminomethyl group of 7-deazaguanine (preQ1-tRNA) to give epoxyqueuosine (oQ-tRNA). This Staphylococcus aureus (strain Mu3 / ATCC 700698) protein is S-adenosylmethionine:tRNA ribosyltransferase-isomerase.